The sequence spans 31 residues: Cytochrome b6-f complex subunit 6 (31 aa).

A helical membrane pass occupies residues 3-23; the sequence is LFIGYIIFLVAFFGLATGLFL.

The protein belongs to the PetL family. In terms of assembly, the 4 large subunits of the cytochrome b6-f complex are cytochrome b6, subunit IV (17 kDa polypeptide, PetD), cytochrome f and the Rieske protein, while the 4 small subunits are PetG, PetL, PetM and PetN. The complex functions as a dimer.

Its subcellular location is the plastid. The protein localises to the chloroplast thylakoid membrane. In terms of biological role, component of the cytochrome b6-f complex, which mediates electron transfer between photosystem II (PSII) and photosystem I (PSI), cyclic electron flow around PSI, and state transitions. PetL is important for photoautotrophic growth as well as for electron transfer efficiency and stability of the cytochrome b6-f complex. The chain is Cytochrome b6-f complex subunit 6 from Porphyra purpurea (Red seaweed).